Here is an 88-residue protein sequence, read N- to C-terminus: MARSLKKGPFVDESLFKKVTAAKDGEVIKTWSRRSTIFPEFIGKTFGVYNGKEFIPVYITEDMVGNKLGEFAPTRKFGGHGDDKGKKK.

The protein belongs to the universal ribosomal protein uS19 family.

Functionally, protein S19 forms a complex with S13 that binds strongly to the 16S ribosomal RNA. The sequence is that of Small ribosomal subunit protein uS19 from Mycoplasma mycoides subsp. mycoides SC (strain CCUG 32753 / NCTC 10114 / PG1).